A 224-amino-acid chain; its full sequence is MQKTSILIVALVALFAITEALPSLPTTGPIRVRRQVLGGSLTSNPAGGADARLDLTKGIGNPNHNVVGQVFAAGNTQSGPVTTGGTLAYNNAGHGASLTKTHTPGVKDVFQQEAHANLFNNGRHNLDAKVFASQNKLANGFEFQRNGAGLDYSHINGHGASLTHSNFPGIGQQLGLDGRANLWSSPNRATTLDLTGSASKWTSGPFANQKPNFGAGLGLSHHFG.

Positions 1–20 (MQKTSILIVALVALFAITEA) are cleaved as a signal peptide. Positions 21–34 (LPSLPTTGPIRVRR) are excised as a propeptide.

The protein belongs to the attacin/sarcotoxin-2 family. Hemolymph (at protein level).

Its subcellular location is the secreted. Hemolymph antibacterial protein. This is Attacin-A (AttA) from Drosophila melanogaster (Fruit fly).